The primary structure comprises 141 residues: UPF0310 protein Mflv_0785 (141 aa).

This sequence belongs to the UPF0310 family.

This chain is UPF0310 protein Mflv_0785, found in Mycolicibacterium gilvum (strain PYR-GCK) (Mycobacterium gilvum (strain PYR-GCK)).